The following is a 579-amino-acid chain: O-fucosyltransferase 24 (579 aa).

The chain crosses the membrane as a helical; Signal-anchor for type II membrane protein span at residues 58–78 (LWAFSLFLLSILGISLRLGLC). Asparagine 133 is a glycosylation site (N-linked (GlcNAc...) asparagine). 355-357 (HLR) provides a ligand contact to substrate. N-linked (GlcNAc...) asparagine glycosylation is found at asparagine 528, asparagine 573, and asparagine 576.

Belongs to the glycosyltransferase GT106 family.

It is found in the membrane. It functions in the pathway glycan metabolism. The sequence is that of O-fucosyltransferase 24 from Arabidopsis thaliana (Mouse-ear cress).